Here is a 412-residue protein sequence, read N- to C-terminus: Tyrosine--tRNA ligase (412 aa).

Y31 provides a ligand contact to L-tyrosine. The short motif at 36–45 (PTAPSLHIGH) is the 'HIGH' region element. L-tyrosine is bound by residues Y162 and Q166. Residues 222 to 226 (KIGKT) carry the 'KMSKS' region motif. Residue K225 coordinates ATP. Positions 345–412 (KRWLDVVVQL…KKKKQVIDLN (68 aa)) constitute an S4 RNA-binding domain.

This sequence belongs to the class-I aminoacyl-tRNA synthetase family. TyrS type 1 subfamily. Homodimer.

The protein resides in the cytoplasm. The catalysed reaction is tRNA(Tyr) + L-tyrosine + ATP = L-tyrosyl-tRNA(Tyr) + AMP + diphosphate + H(+). Functionally, catalyzes the attachment of tyrosine to tRNA(Tyr) in a two-step reaction: tyrosine is first activated by ATP to form Tyr-AMP and then transferred to the acceptor end of tRNA(Tyr). This is Tyrosine--tRNA ligase from Chlamydia muridarum (strain MoPn / Nigg).